We begin with the raw amino-acid sequence, 321 residues long: Phosphate acyltransferase (321 aa).

The protein belongs to the PlsX family. In terms of assembly, homodimer. Probably interacts with PlsY.

The protein localises to the cytoplasm. It catalyses the reaction a fatty acyl-[ACP] + phosphate = an acyl phosphate + holo-[ACP]. Its pathway is lipid metabolism; phospholipid metabolism. Catalyzes the reversible formation of acyl-phosphate (acyl-PO(4)) from acyl-[acyl-carrier-protein] (acyl-ACP). This enzyme utilizes acyl-ACP as fatty acyl donor, but not acyl-CoA. The chain is Phosphate acyltransferase from Chlamydia trachomatis serovar A (strain ATCC VR-571B / DSM 19440 / HAR-13).